The chain runs to 363 residues: Trichocyst matrix protein T4-A (363 aa).

The first 17 residues, 1–17, serve as a signal peptide directing secretion; that stretch reads MARSLTILAIVFAVATA. Positions 18-52 are excised as a propeptide; the sequence is RVTKSESPKEILAQVNKDSFGNSILSVLQLQLATG. Residues 85-119 are a coiled coil; that stretch reads VAFEKIIADLEQEIAYHQTQIVALSNLRDSTTEAL. Positions 190 to 221 are excised as a propeptide; the sequence is RFEKVQAKLMESKHALFKPLINALTQLASKVD. Positions 244 to 352 form a coiled coil; that stretch reads ASLLATEERQ…EVLTQKLSAA (109 aa).

Belongs to the TMP family. Post-translationally, two components are produced by post-translational processing from the precursor peptide.

It localises to the trichocyst. Structural protein that crystallize inside the trichocyst matrix. This chain is Trichocyst matrix protein T4-A (T4A), found in Paramecium tetraurelia.